A 557-amino-acid polypeptide reads, in one-letter code: UvrABC system protein C (557 aa).

Residues 14 to 89 (EEPGVYIFKN…IKKYRPKYNV (76 aa)) enclose the GIY-YIG domain. One can recognise a UVR domain in the interval 194 to 229 (EEVFDYLKEKMETHSKMLDFENAAKYRDLLLNLSNV).

Belongs to the UvrC family. In terms of assembly, interacts with UvrB in an incision complex.

It localises to the cytoplasm. In terms of biological role, the UvrABC repair system catalyzes the recognition and processing of DNA lesions. UvrC both incises the 5' and 3' sides of the lesion. The N-terminal half is responsible for the 3' incision and the C-terminal half is responsible for the 5' incision. The sequence is that of UvrABC system protein C from Thermotoga maritima (strain ATCC 43589 / DSM 3109 / JCM 10099 / NBRC 100826 / MSB8).